A 225-amino-acid polypeptide reads, in one-letter code: MIGKFIVFEGVEGGGKTTQIELLQDWLLETGESRQILPKSIDLDLEVVITREPGGTKLGKALRELLLSPDVLAEKIQETSELLLYAADRAQHIEALIKPCLERGTIVLCDRFIDSTIAYQGYGRGLDVELIKQLNYIATGGLKSDLTFWLDIDVEIGLARAKSRGNFDRMEQANIEFHRRVQQGYQELAKNNSLIVRIDANLTREKVQQQIQAIIMQKLVEWKYI.

G10–T17 contacts ATP.

The protein belongs to the thymidylate kinase family.

It carries out the reaction dTMP + ATP = dTDP + ADP. Phosphorylation of dTMP to form dTDP in both de novo and salvage pathways of dTTP synthesis. This Trichodesmium erythraeum (strain IMS101) protein is Thymidylate kinase.